Consider the following 632-residue polypeptide: Probable potassium transport system protein Kup 1 (632 aa).

The next 12 helical transmembrane spans lie at 17–37, 60–80, 106–126, 146–166, 175–195, 210–230, 254–274, 292–312, 344–364, 370–390, 401–421, and 426–446; these read LFYL…TSPL, LISL…VLFL, TAIL…DAMI, LADY…VVQS, FFGP…ISHI, AVAF…AVFL, WFLL…ALVL, ALLP…QAVI, IFVP…VLGF, LATA…IMAF, LPVA…FLGA, and IHDG…VMWT.

It belongs to the HAK/KUP transporter (TC 2.A.72) family.

The protein localises to the cell inner membrane. The catalysed reaction is K(+)(in) + H(+)(in) = K(+)(out) + H(+)(out). Functionally, transport of potassium into the cell. Likely operates as a K(+):H(+) symporter. The chain is Probable potassium transport system protein Kup 1 from Rhizobium johnstonii (strain DSM 114642 / LMG 32736 / 3841) (Rhizobium leguminosarum bv. viciae).